The primary structure comprises 163 residues: Putative 4-hydroxy-4-methyl-2-oxoglutarate aldolase (163 aa).

Substrate-binding positions include 76-79 (GDMI) and R98. A divalent metal cation is bound at residue D99.

This sequence belongs to the class II aldolase/RraA-like family. Homotrimer. Requires a divalent metal cation as cofactor.

It carries out the reaction 4-hydroxy-4-methyl-2-oxoglutarate = 2 pyruvate. It catalyses the reaction oxaloacetate + H(+) = pyruvate + CO2. Functionally, catalyzes the aldol cleavage of 4-hydroxy-4-methyl-2-oxoglutarate (HMG) into 2 molecules of pyruvate. Also contains a secondary oxaloacetate (OAA) decarboxylase activity due to the common pyruvate enolate transition state formed following C-C bond cleavage in the retro-aldol and decarboxylation reactions. This is Putative 4-hydroxy-4-methyl-2-oxoglutarate aldolase from Pseudomonas fluorescens.